Consider the following 265-residue polypeptide: Putative hydro-lyase PA14_37210 (265 aa).

This sequence belongs to the D-glutamate cyclase family.

The chain is Putative hydro-lyase PA14_37210 from Pseudomonas aeruginosa (strain UCBPP-PA14).